The chain runs to 1105 residues: Ran-binding protein 6 (1105 aa).

Residue Ala2 is modified to N-acetylalanine. HEAT repeat units follow at residues 219-257 (FKDFADLLPGILQAVNDSCYQDDDSVLESLVEIADTVPK), 361-399 (KVVLPMTKEHIMQMLQSPDWKCRHAGLMALSAIGEGCHQ), 402-440 (EPILDETVNSVLLFLQDPHPRVRAAACTTLGQMATDFAP), 444-483 (KKFHEIVITALLRTMENQGNQRVQSHAASALVIFIEDCPK), 866-905 (LPWFEQLLPLIVNLICSSRPWPDRQWGLCIFDDIIEHCSP), 908-946 (FKYVEYFRWPMLLNMRDNNPEVRQAAAYGLGVMAQFGGD), and 949-987 (RSLCSEAVPLLVKVIKCANSKTKKNVIATENCISAIGKI).

It belongs to the importin beta family.

The protein localises to the cytoplasm. It is found in the nucleus. Functionally, may function in nuclear protein import as nuclear transport receptor. This is Ran-binding protein 6 (Ranbp6) from Mus musculus (Mouse).